Here is an 88-residue protein sequence, read N- to C-terminus: Putative septation protein SpoVG (88 aa).

Belongs to the SpoVG family.

In terms of biological role, could be involved in septation. This chain is Putative septation protein SpoVG, found in Desulforudis audaxviator (strain MP104C).